We begin with the raw amino-acid sequence, 469 residues long: 6-phosphofructo-2-kinase/fructose-2,6-bisphosphatase 4 (469 aa).

A 6-phosphofructo-2-kinase region spans residues Met1–Pro249. Ser29 is subject to Phosphoserine; by PKC. Gly46–Tyr54 serves as a coordination point for ATP. The beta-D-fructose 6-phosphate site is built by Arg79 and Arg103. Asp129 is an active-site residue. Beta-D-fructose 6-phosphate contacts are provided by Thr131 and Arg137. The active site involves Cys159. Position 168-173 (Asn168–Lys173) interacts with ATP. The beta-D-fructose 6-phosphate site is built by Lys173, Arg194, and Tyr198. The fructose-2,6-bisphosphatase stretch occupies residues Arg250–Gln469. Residue Arg256 participates in beta-D-fructose 2,6-bisphosphate binding. The Tele-phosphohistidine intermediate role is filled by His257. 3 residues coordinate beta-D-fructose 2,6-bisphosphate: Asn263, Gly269, and Arg306. Glu326 (proton donor/acceptor) is an active-site residue. The beta-D-fructose 2,6-bisphosphate site is built by Tyr337, Arg351, Lys355, Tyr366, Gln392, and Arg396. An ATP-binding site is contributed by Phe348 to Arg351. ATP contacts are provided by residues Gln392–Arg396 and Tyr428. Thr444 is subject to Phosphothreonine; by PKC.

The protein in the C-terminal section; belongs to the phosphoglycerate mutase family. As to quaternary structure, homodimer. Testis.

It carries out the reaction beta-D-fructose 2,6-bisphosphate + H2O = beta-D-fructose 6-phosphate + phosphate. The catalysed reaction is beta-D-fructose 6-phosphate + ATP = beta-D-fructose 2,6-bisphosphate + ADP + H(+). With respect to regulation, the most important regulatory mechanism of these opposing activities is by phosphorylation and dephosphorylation of the enzyme. Synthesis and degradation of fructose 2,6-bisphosphate. The protein is 6-phosphofructo-2-kinase/fructose-2,6-bisphosphatase 4 (Pfkfb4) of Rattus norvegicus (Rat).